The sequence spans 1293 residues: DNA repair protein complementing XP-C cells homolog (1293 aa).

Disordered regions lie at residues 1 to 199 (MSDE…FEDK), 217 to 239 (ERTR…QAAT), 255 to 341 (QSVE…NISG), 514 to 640 (DLIP…SKCL), and 658 to 919 (LSSK…EPAK). The span at 18–30 (DEWKPSKDVKGGE) shows a compositional bias: basic and acidic residues. Phosphoserine occurs at positions 31, 32, and 37. Acidic residues predominate over residues 31 to 43 (SSDDDDSDFDELQ). The span at 51–60 (SSGRSSAVAG) shows a compositional bias: low complexity. 2 stretches are compositionally biased toward polar residues: residues 101–130 (FPTS…SGAR) and 226–238 (RNVT…SQAA). The segment covering 288 to 301 (SKTKSTRIKRHTKT) has biased composition (basic residues). The segment covering 313 to 335 (DTDDSDFEEVADADLSSDQDDGE) has biased composition (acidic residues). Positions 520–578 (LRPDDKNKSQTVESERESEDEKPKKDKKAGKPAEKESSKSTISKEAEKKNNAKKAEAKP) are enriched in basic and acidic residues. A phosphoserine mark is found at Ser-533 and Ser-537. Over residues 580–594 (SKSTTKGSETTKSGT) the composition is skewed to low complexity. A compositionally biased stretch (basic and acidic residues) spans 598–612 (VKKELSLSSKLVEKS). The segment covering 658–692 (LSSKLVLKSKNQSSFSSNKSDTSFEENPSTSSSSK) has biased composition (low complexity). The span at 693 to 711 (SLKEETAKLSSSKLEDKKV) shows a compositional bias: basic and acidic residues. The segment covering 720–737 (KVQSSLLKRVTTQNISES) has biased composition (polar residues). Over residues 806–818 (HLQEQRNTRETRS) the composition is skewed to basic and acidic residues. Residues Ser-908 and Ser-911 each carry the phosphoserine modification. Short sequence motifs (nuclear localization signal) lie at residues 922–938 (KKAP…RKDR), 1195–1211 (KKTV…ICKK), and 1275–1291 (KKLI…KKKY).

Belongs to the XPC family. In terms of assembly, heterodimer.

Its subcellular location is the nucleus. In terms of biological role, involved in DNA excision repair. May play a part in DNA damage recognition and/or in altering chromatin structure to allow access by damage-processing enzymes. Its function is as follows. Involved in nucleotide excision repair of DNA damaged with UV light, bulky adducts, or cross-linking agents. The sequence is that of DNA repair protein complementing XP-C cells homolog from Drosophila melanogaster (Fruit fly).